Consider the following 170-residue polypeptide: RxLR effector protein CRE16 (170 aa).

Residues 1 to 23 form the signal peptide; it reads MSKLFYAFAVLAVHVLTSSPTTA. The RxLR-dEER signature appears at 47–68; it reads RFLRSIHEGEDSLKPSAFSEER.

The protein belongs to the RxLR effector family.

It localises to the secreted. The protein localises to the host cytoplasm. It is found in the host nucleus. Its function is as follows. Effector that is involved in host plant infection. Contributes to virulence during the early infection stage, by inhibiting plant defense responses induced by both PAMP-triggered immunity (PTI) and effector-triggered immunity (ETI). The protein is RxLR effector protein CRE16 of Phytophthora infestans (strain T30-4) (Potato late blight agent).